Consider the following 323-residue polypeptide: Formyltetrahydrofolate deformylase 1, mitochondrial (323 aa).

Residues 1–25 (MIRRITERASGFAKNIPILKSSRFH) constitute a mitochondrion transit peptide. Residues 41–124 (VHVFHCQDAV…SVVRVPSIDP (84 aa)) form the ACT domain. The active site involves aspartate 267.

Belongs to the PurU family. In terms of tissue distribution, expressed in leaves, cotyledons, roots, seeds and flowers.

It is found in the mitochondrion. It catalyses the reaction (6R)-10-formyltetrahydrofolate + H2O = (6S)-5,6,7,8-tetrahydrofolate + formate + H(+). In terms of biological role, deformylase involved in photorespiration. Prevents excessive accumulation of 5-formyl tetrahydrofolate (THF), a potent inhibitor of the Gly decarboxylase/Ser hydroxymethyltransferase complex. The sequence is that of Formyltetrahydrofolate deformylase 1, mitochondrial (PURU1) from Arabidopsis thaliana (Mouse-ear cress).